The following is a 357-amino-acid chain: DNA replication and repair protein RecF (357 aa).

31–38 (GQNGAGKT) is a binding site for ATP.

This sequence belongs to the RecF family.

The protein localises to the cytoplasm. The RecF protein is involved in DNA metabolism; it is required for DNA replication and normal SOS inducibility. RecF binds preferentially to single-stranded, linear DNA. It also seems to bind ATP. This Coxiella burnetii (strain CbuK_Q154) (Coxiella burnetii (strain Q154)) protein is DNA replication and repair protein RecF.